Consider the following 296-residue polypeptide: Protoheme IX farnesyltransferase 2 (296 aa).

Transmembrane regions (helical) follow at residues L7–F27, P36–L56, L83–W103, L108–F128, Y134–V154, A163–F183, I207–G227, A229–L249, and F265–V285.

It belongs to the UbiA prenyltransferase family. Protoheme IX farnesyltransferase subfamily.

It is found in the cell inner membrane. It catalyses the reaction heme b + (2E,6E)-farnesyl diphosphate + H2O = Fe(II)-heme o + diphosphate. Its pathway is porphyrin-containing compound metabolism; heme O biosynthesis; heme O from protoheme: step 1/1. Its function is as follows. Converts heme B (protoheme IX) to heme O by substitution of the vinyl group on carbon 2 of heme B porphyrin ring with a hydroxyethyl farnesyl side group. In Pseudomonas paraeruginosa (strain DSM 24068 / PA7) (Pseudomonas aeruginosa (strain PA7)), this protein is Protoheme IX farnesyltransferase 2.